The chain runs to 350 residues: Arginine/serine-rich coiled-coil protein 2 (350 aa).

2 disordered regions span residues 1–146 (MIRT…FRGR) and 328–350 (SQTH…MDAV). A compositionally biased stretch (basic residues) spans 10–24 (QARRHEVKAKSSKKH). Basic and acidic residues predominate over residues 25 to 51 (RSDDTVDRDHSDKIRDRLNSSENGDEK). The span at 52–132 (HRRKEKRSSR…IEKPRRHSRS (81 aa)) shows a compositional bias: basic residues. A coiled-coil region spans residues 146–187 (RNAAMDAQEALARRLERAKKLQEQREKESAEKQQEIAAVAAA).

Belongs to the RSRC2 family.

In Xenopus laevis (African clawed frog), this protein is Arginine/serine-rich coiled-coil protein 2 (rsrc2).